Reading from the N-terminus, the 214-residue chain is Pyridoxine/pyridoxamine 5'-phosphate oxidase (214 aa).

Residues 9–12 (RKDY) and lysine 67 each bind substrate. Residues 62-67 (RMVLLK), 77-78 (FT), arginine 83, lysine 84, and glutamine 106 contribute to the FMN site. 3 residues coordinate substrate: tyrosine 124, arginine 128, and serine 132. Residues 141–142 (QS) and tryptophan 186 each bind FMN. 192 to 194 (RLH) contacts substrate. FMN is bound at residue arginine 196.

The protein belongs to the pyridoxamine 5'-phosphate oxidase family. In terms of assembly, homodimer. The cofactor is FMN.

The catalysed reaction is pyridoxamine 5'-phosphate + O2 + H2O = pyridoxal 5'-phosphate + H2O2 + NH4(+). It carries out the reaction pyridoxine 5'-phosphate + O2 = pyridoxal 5'-phosphate + H2O2. The protein operates within cofactor metabolism; pyridoxal 5'-phosphate salvage; pyridoxal 5'-phosphate from pyridoxamine 5'-phosphate: step 1/1. It functions in the pathway cofactor metabolism; pyridoxal 5'-phosphate salvage; pyridoxal 5'-phosphate from pyridoxine 5'-phosphate: step 1/1. Catalyzes the oxidation of either pyridoxine 5'-phosphate (PNP) or pyridoxamine 5'-phosphate (PMP) into pyridoxal 5'-phosphate (PLP). This is Pyridoxine/pyridoxamine 5'-phosphate oxidase from Trichormus variabilis (strain ATCC 29413 / PCC 7937) (Anabaena variabilis).